We begin with the raw amino-acid sequence, 935 residues long: MTELKAKGPRAPHVAGGPPSPEVGSPLLCRPAVGPFPGSQTSDTLPEVSAIPISLDGLLFPRPCQGQDPSDEKTQDQQSLSDVEGAYSRAEAKRGAGGSSSSPPEKDSGLLDSVLDTLLAPSGPGQSQPSPPACEVTSSWCLFGPELPEDPPAAPATQGVLSPLMSRSGGKAGDSSGTAAAHKVLPRGLSPSRQLLLPASGSPHWSGAPVKPSPQPAAVEVEEEDGSESEDSAGPLLKGKPRALGGAAAGGGAAAVPPGVAAGGVALVPKEDSRFSAPRVALVEQDAPMAPGRSPLATTVMDFIHVPILPLNHALLAARTRQLLEDESYDGGAGAASAFAPPRSSPSASSTPVAVGDFPDCAYPPDAEPKDDAYPLYSDFQPPALKIKEEEEGAEASTRSPRSYLVAGANPAAFPDFPLGPPPPLPPRAPPTRAGEAAVTAAPASASVSSASSSGSTLECILYKAQGAPPQQGPFAPPPXKAPGVSGCLLPRDGLPSTSASAAAAAAGAAPALYPALGLNGLPQLGYQAAVLKEGLPQVYPPYLNYLRPDSEASQSPQYSFESLPQKICLICGDEASGCHYGVLTCGSCKVFFKRAMEGQHNYLCAGRNDCIVDKIRRKNCPACRLRKCCQAGMVLGGRKFKKFNKVRVVRALDAVALPQPVGIPNESQALSQRFTFSPGQDIQLIPPLINLLMSIEPDVIYAGHDNTKPDTSSSLLTSLNQLGERQLLSVVKWSKSLPGFRNLHIDDQITLIQYSWMSLMVFGLGWRSYKHVSGQMLYFAPDLILNEQRMKESSFYSLCLTMWQIPQEFVKLQVSQEEFLCMKVLLLLNTIPLEGLRSQTQFEEMRSSYIRELIKAIGLRQKGVVSSSQRFYQLTKLLDNLHDLVKQLHLYCLNTFIQSRALSVEFPEMMSEVIAAQLPKILAGMVKPLLFHKK.

The AF3; mediates transcriptional activation stretch occupies residues 1–164 (MTELKAKGPR…PATQGVLSPL (164 aa)). The interval 1–254 (MTELKAKGPR…GGAAAGGGAA (254 aa)) is disordered. The segment at 1-568 (MTELKAKGPR…YSFESLPQKI (568 aa)) is modulating, Pro-Rich. Ser20 carries the post-translational modification Phosphoserine. The LXXL motif 1 signature appears at 55-59 (LDGLL). The residue at position 81 (Ser81) is a Phosphoserine. An LXXL motif 2 motif is present at residues 115 to 119 (LDTLL). 2 positions are modified to phosphoserine: Ser130 and Ser162. Residues 165-305 (MSRSGGKAGD…LATTVMDFIH (141 aa)) form a mediates transcriptional transrepression region. A Nuclear localization signal motif is present at residues 183 to 187 (KVLPR). Phosphoserine occurs at positions 190 and 213. Positions 220 to 231 (EVEEEDGSESED) are enriched in acidic residues. The span at 232-246 (SAGPLLKGKPRALGG) shows a compositional bias: low complexity. Ser294 is subject to Phosphoserine; by MAPK1. The disordered stretch occupies residues 331–378 (GGAGAASAFAPPRSSPSASSTPVAVGDFPDCAYPPDAEPKDDAYPLYS). Residues 335-350 (AASAFAPPRSSPSASS) are compositionally biased toward low complexity. At Ser345 the chain carries Phosphoserine; by MAPK. Lys388 participates in a covalent cross-link: Glycyl lysine isopeptide (Lys-Gly) (interchain with G-Cter in SUMO); alternate. Lys388 participates in a covalent cross-link: Glycyl lysine isopeptide (Lys-Gly) (interchain with G-Cter in ubiquitin); alternate. Ser400 carries the phosphoserine; by CDK2 modification. Pro residues predominate over residues 418-430 (PLGPPPPLPPRAP). The disordered stretch occupies residues 418 to 438 (PLGPPPPLPPRAPPTRAGEAA). The interval 456–548 (STLECILYKA…VYPPYLNYLR (93 aa)) is AF1; mediates transcriptional activation. Lys533 is covalently cross-linked (Glycyl lysine isopeptide (Lys-Gly) (interchain with G-Cter in SUMO)). 2 consecutive NR C4-type zinc fingers follow at residues 569 to 589 (CLIC…CGSC) and 605 to 629 (CAGR…LRKC). A DNA-binding region (nuclear receptor) is located at residues 569–641 (CLICGDEASG…AGMVLGGRKF (73 aa)). A Phosphoserine modification is found at Ser678. In terms of domain architecture, NR LBD spans 681-915 (QDIQLIPPLI…EFPEMMSEVI (235 aa)). Residues 689 to 935 (LINLLMSIEP…MVKPLLFHKK (247 aa)) are AF2; mediates transcriptional activation.

It belongs to the nuclear hormone receptor family. As to quaternary structure, interacts with SMARD1 and UNC45A. Interacts with CUEDC2; the interaction promotes ubiquitination, decreases sumoylation, and represses transcriptional activity. Interacts with PIAS3; the interaction promotes sumoylation of PR in a hormone-dependent manner, inhibits DNA-binding, and alters nuclear export. Interacts with SP1; the interaction requires ligand-induced phosphorylation on Ser-345 by ERK1/2-MAPK. Interacts with PRMT2. Interacts with NCOA2 and NCOA1. Interacts with KLF9. Interacts with GTF2B. Phosphorylated on multiple serine sites. Several of these sites are hormone-dependent. Phosphorylation on Ser-294 is highly hormone-dependent and modulates ubiquitination and sumoylation on Lys-388. Phosphorylation on Ser-102 and Ser-345 also requires induction by hormone. Basal phosphorylation on Ser-81, Ser-162, Ser-190 and Ser-400 is increased in response to progesterone and can be phosphorylated in vitro by the CDK2-A1 complex. Increased levels of phosphorylation on Ser-400 also in the presence of EGF, heregulin, IGF, PMA and FBS. Phosphorylation at this site by CDK2 is ligand-independent, and increases nuclear translocation and transcriptional activity. Phosphorylation at Ser-162 and Ser-294, but not at Ser-190, is impaired during the G(2)/M phase of the cell cycle. Phosphorylation on Ser-345 by ERK1/2 MAPK is required for interaction with SP1. Post-translationally, sumoylation is hormone-dependent and represses transcriptional activity. Sumoylation on all three sites is enhanced by PIAS3. Desumoylated by SENP1. Sumoylation on Lys-388, the main site of sumoylation, is repressed by ubiquitination on the same site, and modulated by phosphorylation at Ser-294. In terms of processing, ubiquitination is hormone-dependent and represses sumoylation on the same site. Promoted by MAPK-mediated phosphorylation on Ser-294. Palmitoylated by ZDHHC7 and ZDHHC21. Palmitoylation is required for plasma membrane targeting and for rapid intracellular signaling via ERK and AKT kinases and cAMP generation.

It is found in the nucleus. The protein localises to the cytoplasm. Functionally, the steroid hormones and their receptors are involved in the regulation of eukaryotic gene expression and affect cellular proliferation and differentiation in target tissues. Transcriptional activator of several progesteron-dependent promoters in a variety of cell types. Involved in activation of SRC-dependent MAPK signaling on hormone stimulation. In Pongo pygmaeus (Bornean orangutan), this protein is Progesterone receptor (PGR).